A 93-amino-acid polypeptide reads, in one-letter code: Small ribosomal subunit protein uS19 (93 aa).

It belongs to the universal ribosomal protein uS19 family.

Its function is as follows. Protein S19 forms a complex with S13 that binds strongly to the 16S ribosomal RNA. This is Small ribosomal subunit protein uS19 from Brevibacillus brevis (strain 47 / JCM 6285 / NBRC 100599).